A 901-amino-acid chain; its full sequence is MTAKAKDCPSLWGFGTTKTFKIPIEHLDFKYIENCSDVKHLEKILYVLRSGEEGYYPELTEFCEKCLTNLAPKSRALRKDKPAETASSFSAEEWEKIDSDLKSWVSEIKREENTCHFHDPENHPGVEDPLPPVRGSTCCPHSGKETYSKSKTAKKRIPRDYAEWDKFDVEKECSKIDEDYKEKTVINNKAHLSKIETKIETAGLTEKEKSFLANREKGKGNEAFYSGDYEEAVMYYTRSLSALPTAIAYNNRAQAEIKLQRWSSALEDCEKALELDPGNVKALLRRATTYKHQNKLQEAVDDLRKVLQVEPDNDLAKKTLSEVERDLKNSEPVSELQTKGKRMVIEEVENSGDEGGKGSADEREDGGSDEAAMGNIQKKLMVRRSEGGRRSRRGRTPGPRAEQQGGLRETATASTGDSHYPEEPRAADNPSGLKRRGNELFRGGQFAEAAAQYSVAIAQLEPTGSANADELSILYSNRAACYLKEGNCRDCIQDCNRALELHPFSVKPLLRRAMAYETLEQYRNAYVDYKTVLQIDCGIQLASDSANRIARILTELDGSKWRERLPPIPAVPTSEPLRVWLPAAETPDQDPCPNNCMPSITDEKMFQALKEEGNQLVKDKNYKDAISKYNECLKINSKACAIYTNRALCYLKLGQFEEAKLDCEQALQIDGENVKASHRLALAQKGLENCRESGVDPSQVLLSPDSSEAARHLDTKNDTAPPSKGRERRRIQVQEVDGSSDEEPERPAEASATSAPARDGVEDGGSAEPAEKLDVSKPTNAYEFGQVLSTISARKDEEACAHLLAITAPKDLPLLLSNKLEGDTFLLLIQSLKSHLVAKDPSLVYEHLLYLSKAERFKTMLTLINKGQKEQMAQLFDGLSDTQSDGLTAEDVQALRRQYEL.

TPR repeat units follow at residues 213–246 (ANRE…LPTA), 247–279 (IAYN…DPGN), and 280–313 (VKAL…EPDN). A disordered region spans residues 322 to 437 (EVERDLKNSE…DNPSGLKRRG (116 aa)). Ser-351 and Ser-359 each carry phosphoserine. 5 TPR repeats span residues 430-464 (PSGL…EPTG), 472-505 (SILY…HPFS), 507-539 (KPLL…DCGI), 606-639 (FQAL…NSKA), and 640-673 (CAIY…DGEN). Residues 694-776 (GVDPSQVLLS…AEPAEKLDVS (83 aa)) are disordered. Position 703 is a phosphoserine (Ser-703). A compositionally biased stretch (basic and acidic residues) spans 708 to 717 (EAARHLDTKN). A phosphoserine mark is found at Ser-739 and Ser-740. Residue 756-763 (PARDGVED) coordinates GTP. At Ser-766 the chain carries Phosphoserine.

In terms of tissue distribution, detected in cerebellum, tongue, esophagus, forestomach, sperm and testis.

It localises to the cytoplasm. The protein localises to the dynein axonemal particle. In terms of biological role, may play a role in the cytoplasmic assembly of the ciliary dynein arms. May play a role in fertilization. Binds GTP and has GTPase activity. The polypeptide is Sperm-associated antigen 1 (Spag1) (Mus musculus (Mouse)).